The following is a 231-amino-acid chain: Large ribosomal subunit protein uL1 (231 aa).

The protein belongs to the universal ribosomal protein uL1 family. As to quaternary structure, part of the 50S ribosomal subunit.

Its function is as follows. Binds directly to 23S rRNA. The L1 stalk is quite mobile in the ribosome, and is involved in E site tRNA release. In terms of biological role, protein L1 is also a translational repressor protein, it controls the translation of the L11 operon by binding to its mRNA. The chain is Large ribosomal subunit protein uL1 from Pseudomonas syringae pv. tomato (strain ATCC BAA-871 / DC3000).